A 511-amino-acid polypeptide reads, in one-letter code: Apolipoprotein N-acyltransferase (511 aa).

6 helical membrane-spanning segments follow: residues 7 to 29 (PGWPGHLLALAAGALTPLALAPF), 58 to 78 (GWWYGFGAFGAGTSWIYVSIH), 90 to 110 (LLMLGFTAGVAFFFALPAWLW), 125 to 145 (LAFAALWLALELFRSWFLTGF), 163 to 183 (VPVGGVWLSSFVIALSAALLV), and 192 to 212 (GASLLLGLVLLLGPWAAGLYL). The 241-residue stretch at 230–470 (IQGNIAQELK…QGILRGEVIP (241 aa)) folds into the CN hydrolase domain. Catalysis depends on glutamate 269, which acts as the Proton acceptor. Residue lysine 330 is part of the active site. Cysteine 382 functions as the Nucleophile in the catalytic mechanism. Residues 482-502 (VWPLAGLAGVLLLWALLGRQL) form a helical membrane-spanning segment.

It belongs to the CN hydrolase family. Apolipoprotein N-acyltransferase subfamily.

Its subcellular location is the cell inner membrane. It carries out the reaction N-terminal S-1,2-diacyl-sn-glyceryl-L-cysteinyl-[lipoprotein] + a glycerophospholipid = N-acyl-S-1,2-diacyl-sn-glyceryl-L-cysteinyl-[lipoprotein] + a 2-acyl-sn-glycero-3-phospholipid + H(+). It functions in the pathway protein modification; lipoprotein biosynthesis (N-acyl transfer). Functionally, catalyzes the phospholipid dependent N-acylation of the N-terminal cysteine of apolipoprotein, the last step in lipoprotein maturation. This chain is Apolipoprotein N-acyltransferase, found in Pseudomonas aeruginosa (strain LESB58).